A 174-amino-acid chain; its full sequence is NAD(P)H-quinone oxidoreductase subunit J, chloroplastic (174 aa).

This sequence belongs to the complex I 30 kDa subunit family. In terms of assembly, NDH is composed of at least 16 different subunits, 5 of which are encoded in the nucleus.

Its subcellular location is the plastid. The protein localises to the chloroplast thylakoid membrane. The enzyme catalyses a plastoquinone + NADH + (n+1) H(+)(in) = a plastoquinol + NAD(+) + n H(+)(out). The catalysed reaction is a plastoquinone + NADPH + (n+1) H(+)(in) = a plastoquinol + NADP(+) + n H(+)(out). Its function is as follows. NDH shuttles electrons from NAD(P)H:plastoquinone, via FMN and iron-sulfur (Fe-S) centers, to quinones in the photosynthetic chain and possibly in a chloroplast respiratory chain. The immediate electron acceptor for the enzyme in this species is believed to be plastoquinone. Couples the redox reaction to proton translocation, and thus conserves the redox energy in a proton gradient. This is NAD(P)H-quinone oxidoreductase subunit J, chloroplastic from Mesostigma viride (Green alga).